We begin with the raw amino-acid sequence, 757 residues long: Endonuclease MutS2 (757 aa).

321-328 (GPNMGGKT) is a binding site for ATP. Positions 681-756 (IDIRGMTVEE…GTGVTVVEVK (76 aa)) constitute a Smr domain.

It belongs to the DNA mismatch repair MutS family. MutS2 subfamily. Homodimer. Binds to stalled ribosomes, contacting rRNA.

Its function is as follows. Endonuclease that is involved in the suppression of homologous recombination and thus may have a key role in the control of bacterial genetic diversity. In terms of biological role, acts as a ribosome collision sensor, splitting the ribosome into its 2 subunits. Detects stalled/collided 70S ribosomes which it binds and splits by an ATP-hydrolysis driven conformational change. Acts upstream of the ribosome quality control system (RQC), a ribosome-associated complex that mediates the extraction of incompletely synthesized nascent chains from stalled ribosomes and their subsequent degradation. Probably generates substrates for RQC. This Thermotoga sp. (strain RQ2) protein is Endonuclease MutS2.